Here is a 272-residue protein sequence, read N- to C-terminus: HMP-PP phosphatase (272 aa).

The active-site Nucleophile is D8. 3 residues coordinate Mg(2+): D8, D10, and D212.

This sequence belongs to the HAD-like hydrolase superfamily. Cof family. The cofactor is Mg(2+).

The catalysed reaction is 4-amino-2-methyl-5-(diphosphooxymethyl)pyrimidine + H2O = 4-amino-2-methyl-5-(phosphooxymethyl)pyrimidine + phosphate + H(+). Its function is as follows. Catalyzes the hydrolysis of 4-amino-2-methyl-5-hydroxymethylpyrimidine pyrophosphate (HMP-PP) to 4-amino-2-methyl-5-hydroxymethylpyrimidine phosphate (HMP-P). In Citrobacter koseri (strain ATCC BAA-895 / CDC 4225-83 / SGSC4696), this protein is HMP-PP phosphatase.